The following is a 1488-amino-acid chain: MSGNFRFMMDQKDIVRFLTTTIDSFIQDRLINKEQRTQHKDQCAERLAAEDGNTDKETEVEYSDQAVLANLDWGIEALEEAINTYNMETKLARLDYAEKMLQVCAMLNPKQKTAGVPNSYLSAWAHLNLSYLWKLRNNIKSCIYHSLEMFIVDPFFSRIDFAPELWKNLFLPHMSSIVGWYSEERHKLMMEVLPESTDFSYTADFDKVFNESLVFSMRPNQLEKLQKLEQLYGESLDENTRLYAKYYNDCMNPDSTSSKKVVPMLPIAEPPMTPLHELSRSVPDFVKFGPILPKSSGFSMTTRRSNDGLNETTRENIASNSNHSKGEQSSLWAAKESIIEEIEDDLDSEHYDASVDSDKINIFSPEPKKNIKDEDVEPKVYRSNQKNQMNSPNISPMESPRRASNYSSTNPLRRKKESKFLRLLSNRFTGSIVSDHSLSSSPDTSSDHIFTGDEEVMVRNNIKRKNDSQTPSMNQDNENSLVLNDSSHCESEDGYQSSSSFPKLEKLTIGSKPPKDFVCPITGQIFSDPVTLETGQTYERKAIQEWLGTGNTTCPITRQALSANILPKTNYVLKRLIVSWKEQNPELAQEFSNSNTPRGSSCSPSAKDITMVSSIQRTTDSPSQKYKDDYIRQRNNRFTRVSVGASPTSVLSQAAVETIINSLTPYITSLCTSENLQDCEQAVLEIARLWKDSKTDPQIHSYLSKPTVVSGLVEILSASLNREVLRRSIYILSELIFSDERVGETLNSVDSDFDCLAMLLKNGLAEAALLIYQLRPVFAQLSEHELIPSLIQVIQNKSEDIDDFQLAIDPKAAAIAILEQILIGGDEYNRSVNASSVISANGIPAIVKYLDKTEGRRPVISILLCCMQAEKSCKSSIANRIELSPVLELFHAGNDSVRGICVEFLSELVRLNRRTSSNQTLQIIKDEGAFSTMHTFLVYLQMAPMEHQIAVASLLLQLDLLAEPRKMSIYREEAVETLIEALWQKDFSNNQMKALDALLFLIGHVTSSGKSYTEAGLLKIAGFDQPYNVLMKAEQLGHSDNDFMETMEDEKNAMKSWQKRVASVLCNHENGSIFQALEECLKSNSLKMAKSCLVLATWLTHMLFTLPDTGVRDVARKSLLEALMNVLQSSKNLEEKILASLALKSFISDPTVHEVLRVYAKSIYRILRKLKKYSTVAADILKALLNLNSVDVTELWSCKEVVELDLSSNGEVLSLHYLNGQVLSGHADGTIKVWDARKRIPRVIQETREHKKAVTSLCSSVDKLYSSSLDKTIRVWTIKPDGIKCIDVYDVKEAVYELAANAKLACYVTQGTGVKVFNWLDAPKFINFNKYVKCLAVSGDKLYCGCSGYSIQEVDLSKYTSTSFFTGTRKLLGKQTIHSLQIHDDLLFACGSSIDATAGKIFSLSSKMVVGSLSTGLDVHRVAINSDFIFAGTKFGTIEVWLKDKFTRVASIKMAGGNTKITSLASDADGMMLFVGSSDGKIQVWALD.

Disordered stretches follow at residues G297–S330, Y351–R414, and I432–S500. The segment covering E366–V380 has biased composition (basic and acidic residues). The span at R382 to P411 shows a compositional bias: polar residues. The segment covering I432 to T444 has biased composition (low complexity). Residues S468–S486 are compositionally biased toward polar residues. The U-box domain occupies K512–L587. WD repeat units lie at residues S1207–I1244, E1249–D1290, S1412–S1451, and G1456–D1488.

As to expression, expressed in roots and nodules.

The enzyme catalyses S-ubiquitinyl-[E2 ubiquitin-conjugating enzyme]-L-cysteine + [acceptor protein]-L-lysine = [E2 ubiquitin-conjugating enzyme]-L-cysteine + N(6)-ubiquitinyl-[acceptor protein]-L-lysine.. The protein operates within protein modification; protein ubiquitination. Its function is as follows. Putative E3 ubiquitin ligase involved in the rhizobial infection process. Plays an important role in the early steps of bacterial symbiont thread formation in roots, and in growth, differentiation and maintenance of nodules. The sequence is that of Putative E3 ubiquitin-protein ligase LIN from Medicago truncatula (Barrel medic).